Consider the following 365-residue polypeptide: Histidinol-phosphate aminotransferase 2 (365 aa).

K221 is modified (N6-(pyridoxal phosphate)lysine).

This sequence belongs to the class-II pyridoxal-phosphate-dependent aminotransferase family. Histidinol-phosphate aminotransferase subfamily. Homodimer. The cofactor is pyridoxal 5'-phosphate.

It carries out the reaction L-histidinol phosphate + 2-oxoglutarate = 3-(imidazol-4-yl)-2-oxopropyl phosphate + L-glutamate. Its pathway is amino-acid biosynthesis; L-histidine biosynthesis; L-histidine from 5-phospho-alpha-D-ribose 1-diphosphate: step 7/9. The polypeptide is Histidinol-phosphate aminotransferase 2 (hisC2) (Bradyrhizobium diazoefficiens (strain JCM 10833 / BCRC 13528 / IAM 13628 / NBRC 14792 / USDA 110)).